We begin with the raw amino-acid sequence, 718 residues long: Putative proline-rich receptor-like protein kinase PERK11 (718 aa).

Residues 1-256 (MDKVQQQADL…GGTSQQSNES (256 aa)) are disordered. Topologically, residues 1–262 (MDKVQQQADL…SNESNYTEKT (262 aa)) are extracellular. 3 stretches are compositionally biased toward pro residues: residues 45–105 (ATSP…PPQS), 115–132 (IPFP…PPPS), and 157–167 (LPSPPSTPFSP). Low complexity-rich tracts occupy residues 168–203 (PSQE…LQPL) and 211–244 (SNRV…ANSN). Asn231, Asn254, and Asn257 each carry an N-linked (GlcNAc...) asparagine glycan. The helical transmembrane segment at 263–283 (VIGIGIAGVLVILFIAGVFFV) threads the bilayer. Over 284 to 718 (RRKQKKGSSS…RAFNTSHRNH (435 aa)) the chain is Cytoplasmic. The interval 314–348 (HYRQKPGNGNSSAQNSSPDTNSLGNPKHGRGTPDS) is disordered. Polar residues predominate over residues 320 to 337 (GNGNSSAQNSSPDTNSLG). Position 359 is a phosphothreonine (Thr359). Positions 370-649 (FCKSFVVGEG…VRALDTRDDL (280 aa)) constitute a Protein kinase domain. Residues 376 to 384 (VGEGGFGCV) and Lys398 each bind ATP. Phosphotyrosine is present on Tyr443. Residue Asp494 is the Proton acceptor of the active site. Residues Ser498 and Ser527 each carry the phosphoserine modification. Phosphothreonine occurs at positions 528 and 533. Tyr541 is modified (phosphotyrosine). Residues 683–718 (SSDLGTNTGYYPSQDYATSHEYESESRAFNTSHRNH) are disordered. Polar residues-rich tracts occupy residues 685–699 (DLGT…QDYA) and 709–718 (RAFNTSHRNH).

Belongs to the protein kinase superfamily. Ser/Thr protein kinase family. In terms of tissue distribution, mostly expressed in flower buds.

It localises to the cell membrane. The enzyme catalyses L-seryl-[protein] + ATP = O-phospho-L-seryl-[protein] + ADP + H(+). It catalyses the reaction L-threonyl-[protein] + ATP = O-phospho-L-threonyl-[protein] + ADP + H(+). This Arabidopsis thaliana (Mouse-ear cress) protein is Putative proline-rich receptor-like protein kinase PERK11 (PERK11).